A 644-amino-acid polypeptide reads, in one-letter code: Threonine--tRNA ligase (644 aa).

In terms of domain architecture, TGS spans 1-61 (MKVSIEGSVV…TACETLEPVY (61 aa)). The tract at residues 241 to 532 (DHRKLGTQLD…LTEHFAGAFP (292 aa)) is catalytic. Zn(2+)-binding residues include cysteine 333, histidine 384, and histidine 509.

It belongs to the class-II aminoacyl-tRNA synthetase family. Homodimer. It depends on Zn(2+) as a cofactor.

The protein resides in the cytoplasm. It catalyses the reaction tRNA(Thr) + L-threonine + ATP = L-threonyl-tRNA(Thr) + AMP + diphosphate + H(+). Functionally, catalyzes the attachment of threonine to tRNA(Thr) in a two-step reaction: L-threonine is first activated by ATP to form Thr-AMP and then transferred to the acceptor end of tRNA(Thr). Also edits incorrectly charged L-seryl-tRNA(Thr). This chain is Threonine--tRNA ligase, found in Oleidesulfovibrio alaskensis (strain ATCC BAA-1058 / DSM 17464 / G20) (Desulfovibrio alaskensis).